The primary structure comprises 229 residues: MAKKSKQMRAALEKVDSTKAYSVEEAVTLAKETNFAKFDASVEVAYNLNIDVRKADQQIRGAMVLPNGTGKTQRVLVFARGAKAEEAKAAGADFVGEDDLVAKINGGWLDFDVVIATPDMMAIVGRLGRVLGPRNLMPNPKTGTVTMDVAKAVEESKGGKITYRADKAGNVQAIIGKVSFDADKLVENFKAFHEVMVKAKPATAKGTYMTNVSITTTQGVGIKVDPSSF.

The protein belongs to the universal ribosomal protein uL1 family. In terms of assembly, part of the 50S ribosomal subunit.

Functionally, binds directly to 23S rRNA. The L1 stalk is quite mobile in the ribosome, and is involved in E site tRNA release. Protein L1 is also a translational repressor protein, it controls the translation of the L11 operon by binding to its mRNA. In Streptococcus equi subsp. zooepidemicus (strain MGCS10565), this protein is Large ribosomal subunit protein uL1.